A 284-amino-acid polypeptide reads, in one-letter code: HTH-type transcriptional activator RhaR (284 aa).

The HTH araC/xylS-type domain occupies 181 to 279 (DMLMNALRAS…GVSPSAYRQR (99 aa)). 2 consecutive DNA-binding regions (H-T-H motif) follow at residues 198–219 (EAFCEQHHFSARSLRSRFKEQT) and 246–269 (IGDVAALCGFEDSNYFSVVFHQAF).

Binds DNA as a dimer.

It localises to the cytoplasm. Its function is as follows. Activates expression of the rhaSR operon in response to L-rhamnose. This is HTH-type transcriptional activator RhaR from Pectobacterium atrosepticum (strain SCRI 1043 / ATCC BAA-672) (Erwinia carotovora subsp. atroseptica).